We begin with the raw amino-acid sequence, 322 residues long: MPGNSRRRGAVRKSGTKKGAGVGSGGQRRRGLEGRGPTPPAHLRPHHPAAKRARAQPRRPVKRADETETVLGRNPVLECLRAGVPATALYVALGTEADERLTECVARAADSGIAIVELLRADLDRMTANHLHQGIALQVPPYNYAHPDDLLAAALDQPPALLVALDNLSDPRNLGAIMRSVAAFGGHGVLIPQRRSASVTAVAWRTSAGAAARIPVARATNLTRTLKGWADRGVRVIGLDAGGGTALDDVDGTDSLVVVVGSEGKGLSRLVRQNCDEVVSIPMAAQAESLNASVAAGVVLAAIARQRRRPREPREQTQNRMI.

Basic residues-rich tracts occupy residues 1-16 and 43-61; these read MPGNSRRRGAVRKSGT and LRPHHPAAKRARAQPRRPV. The interval 1–69 is disordered; the sequence is MPGNSRRRGA…PVKRADETET (69 aa). S-adenosyl-L-methionine is bound by residues Gly-261, Ile-281, and Leu-290.

The protein belongs to the class IV-like SAM-binding methyltransferase superfamily. RNA methyltransferase TrmH family.

This is an uncharacterized protein from Mycobacterium bovis (strain ATCC BAA-935 / AF2122/97).